Here is a 349-residue protein sequence, read N- to C-terminus: Twinfilin-2-B (349 aa).

2 consecutive ADF-H domains span residues 4 to 139 (QTGI…KHVS) and 177 to 313 (GLSF…DEVH). The interval 321 to 349 (QAFAKPKGPAGKRGQKRLIKGPGENGEDS) is disordered.

Belongs to the actin-binding proteins ADF family. Twinfilin subfamily. In terms of assembly, interacts with G-actin; ADP-actin form and capping protein (CP).

It localises to the cytoplasm. The protein localises to the cytoskeleton. The protein resides in the perinuclear region. Actin-binding protein involved in motile and morphological processes. Inhibits actin polymerization, likely by sequestering G-actin. The chain is Twinfilin-2-B (twf2-b) from Xenopus laevis (African clawed frog).